A 113-amino-acid chain; its full sequence is Large ribosomal subunit protein bL17 (113 aa).

The protein belongs to the bacterial ribosomal protein bL17 family. Part of the 50S ribosomal subunit. Contacts protein L32.

The sequence is that of Large ribosomal subunit protein bL17 from Clostridium kluyveri (strain NBRC 12016).